The following is an 86-amino-acid chain: Large ribosomal subunit protein bL27 (86 aa).

The disordered stretch occupies residues 1 to 21 (MAHKKGGGSSRNGRDSESKRL).

Belongs to the bacterial ribosomal protein bL27 family.

The chain is Large ribosomal subunit protein bL27 from Rubrobacter xylanophilus (strain DSM 9941 / JCM 11954 / NBRC 16129 / PRD-1).